A 190-amino-acid polypeptide reads, in one-letter code: Protein GrpE (190 aa).

The tract at residues 21–49 (DDLQEEVEATETEETVEEVIEETPEKSEL) is disordered. A compositionally biased stretch (acidic residues) spans 23 to 42 (LQEEVEATETEETVEEVIEE).

This sequence belongs to the GrpE family. As to quaternary structure, homodimer.

The protein resides in the cytoplasm. Its function is as follows. Participates actively in the response to hyperosmotic and heat shock by preventing the aggregation of stress-denatured proteins, in association with DnaK and GrpE. It is the nucleotide exchange factor for DnaK and may function as a thermosensor. Unfolded proteins bind initially to DnaJ; upon interaction with the DnaJ-bound protein, DnaK hydrolyzes its bound ATP, resulting in the formation of a stable complex. GrpE releases ADP from DnaK; ATP binding to DnaK triggers the release of the substrate protein, thus completing the reaction cycle. Several rounds of ATP-dependent interactions between DnaJ, DnaK and GrpE are required for fully efficient folding. The sequence is that of Protein GrpE from Streptococcus pyogenes serotype M3 (strain SSI-1).